Here is a 109-residue protein sequence, read N- to C-terminus: MVCGGFACSKNALCALNVVYMLVGLLLIGVAAWAKGLGLVSSIHIIGGVIAVGVFLLLIAVAGLVGAVNHHQVLLFFYMIILGLVFIFQFGISCSCLAINLSKQAGIIN.

Residues 1-12 (MVCGGFACSKNA) lie on the Cytoplasmic side of the membrane. A helical membrane pass occupies residues 13-33 (LCALNVVYMLVGLLLIGVAAW). The Extracellular portion of the chain corresponds to 34-44 (AKGLGLVSSIH). The chain crosses the membrane as a helical span at residues 45–65 (IIGGVIAVGVFLLLIAVAGLV). Residues 66-72 (GAVNHHQ) lie on the Cytoplasmic side of the membrane. A helical transmembrane segment spans residues 73 to 93 (VLLFFYMIILGLVFIFQFGIS). The Extracellular portion of the chain corresponds to 94 to 109 (CSCLAINLSKQAGIIN). The N-linked (GlcNAc...) asparagine glycan is linked to Asn-100.

Belongs to the tetraspanin (TM4SF) family.

The protein localises to the membrane. This Sus scrofa (Pig) protein is Tetraspanin-31 (TSPAN31).